A 387-amino-acid chain; its full sequence is Cystathionine beta-lyase (387 aa).

K204 carries the post-translational modification N6-(pyridoxal phosphate)lysine.

The protein belongs to the trans-sulfuration enzymes family. In terms of assembly, homotetramer. Requires pyridoxal 5'-phosphate as cofactor.

It localises to the cytoplasm. It carries out the reaction L,L-cystathionine + H2O = L-homocysteine + pyruvate + NH4(+). The catalysed reaction is an S-substituted L-cysteine + H2O = a thiol + pyruvate + NH4(+). Its pathway is amino-acid biosynthesis; L-methionine biosynthesis via de novo pathway; L-homocysteine from L-cystathionine: step 1/1. Functionally, catalyzes the cleavage of cystathionine to homocysteine, pyruvate and ammonia during methionine biosynthesis. In Coxiella burnetii (strain RSA 493 / Nine Mile phase I), this protein is Cystathionine beta-lyase (metC).